Consider the following 292-residue polypeptide: 11-beta-hydroxysteroid dehydrogenase 1 (292 aa).

At 2-7 the chain is on the cytoplasmic side; that stretch reads HFMKKY. The helical; Signal-anchor for type II membrane protein transmembrane segment at 8–24 threads the bilayer; it reads LLPILVLFLAYYYYSTK. The Lumenal segment spans residues 25–292; it reads EEFRPEMLQG…SFTFDKLISS (268 aa). NADP(+) is bound by residues 41 to 67, 92 to 93, and 119 to 121; these read GASK…TARS, TM, and NHI. Asn162 carries N-linked (GlcNAc...) asparagine glycosylation. Residue Ser170 participates in substrate binding. Tyr183 (proton acceptor) is an active-site residue. An NADP(+)-binding site is contributed by 183-187; that stretch reads YSASK. Asn207 is a glycosylation site (N-linked (GlcNAc...) asparagine). 218–222 contacts NADP(+); that stretch reads INTET.

This sequence belongs to the short-chain dehydrogenases/reductases (SDR) family. As to quaternary structure, homodimer. Detected in adrenal gland, liver, kidney, testis, and at lower levels in brain and lung (at protein level).

The protein resides in the endoplasmic reticulum membrane. It carries out the reaction an 11beta-hydroxysteroid + NADP(+) = an 11-oxosteroid + NADPH + H(+). The enzyme catalyses corticosterone + NADP(+) = 11-dehydrocorticosterone + NADPH + H(+). It catalyses the reaction a 7beta-hydroxysteroid + NADP(+) = a 7-oxosteroid + NADPH + H(+). The catalysed reaction is 7-oxocholesterol + NADPH + H(+) = 7beta-hydroxycholesterol + NADP(+). It carries out the reaction 7-oxocholesterol + NADPH + H(+) = 7alpha-hydroxycholesterol + NADP(+). The enzyme catalyses chenodeoxycholate + NADP(+) = 7-oxolithocholate + NADPH + H(+). It catalyses the reaction 7-oxolithocholate + NADPH + H(+) = ursodeoxycholate + NADP(+). The catalysed reaction is glycochenodeoxycholate + NADP(+) = 7-oxoglycolithocholate + NADPH + H(+). It carries out the reaction taurochenodeoxycholate + NADP(+) = 7-oxotaurolithocholate + NADPH + H(+). The enzyme catalyses tauroursodeoxycholate + NADP(+) = 7-oxotaurolithocholate + NADPH + H(+). It catalyses the reaction glycoursodeoxycholate + NADP(+) = 7-oxoglycolithocholate + NADPH + H(+). The catalysed reaction is 7-oxopregnenolone + NADPH + H(+) = 7beta-hydroxypregnenolone + NADP(+). It carries out the reaction 3beta,7alpha-dihydroxyandrost-5-en-17-one + NADP(+) = 3beta-hydroxy-5-androstene-7,17-dione + NADPH + H(+). The enzyme catalyses 3beta-hydroxy-5-androstene-7,17-dione + NADPH + H(+) = 3beta,7beta-dihydroxyandrost-5-en-17-one + NADP(+). It catalyses the reaction 3beta-hydroxy-5alpha-androstane-7,17-dione + NADPH + H(+) = 3beta,7beta-dihydroxy-5alpha-androstan-17-one + NADP(+). It participates in steroid metabolism. Functionally, controls the reversible conversion of biologically active glucocorticoids such as 11-dehydrocorticosterone to corticosterone in the presence of NADP(H). Participates in the corticosteroid receptor-mediated anti-inflammatory response, as well as metabolic and homeostatic processes. Bidirectional in vitro, predominantly functions as a reductase in vivo, thereby increasing the concentration of active glucocorticoids. It has broad substrate specificity, besides glucocorticoids, it accepts other steroid and sterol substrates. Interconverts 7-oxo- and 7-hydroxy-neurosteroids such as 7-oxopregnenolone and 7beta-hydroxypregnenolone, 7-oxodehydroepiandrosterone (3beta-hydroxy-5-androstene-7,17-dione) and 7beta-hydroxydehydroepiandrosterone (3beta,7beta-dihydroxyandrost-5-en-17-one), among others. Catalyzes reversibly the conversion of the major dietary oxysterol, 7-ketocholesterol (7-oxocholesterol), into the more polar 7-beta-hydroxycholesterol and 7-alpha-hhydroxycholesterol metabolites. 7-oxocholesterol is one of the most important oxysterols, it participates in several events such as induction of apoptosis, accumulation in atherosclerotic lesions, lipid peroxidation, and induction of foam cell formation. Mediates the 7-oxo reduction of 7-oxolithocholate mainly to chenodeoxycholate, and to a lesser extent to ursodeoxycholate, both in its free form and when conjugated to glycine or taurine, providing a link between glucocorticoid activation and bile acid metabolism. Catalyzes the synthesis of 7-beta-25-dihydroxycholesterol from 7-oxo-25-hydroxycholesterol in vitro, which acts as a ligand for the G-protein-coupled receptor (GPCR) Epstein-Barr virus-induced gene 2 (EBI2) and may thereby regulate immune cell migration. The sequence is that of 11-beta-hydroxysteroid dehydrogenase 1 (HSD11B1) from Mesocricetus auratus (Golden hamster).